Reading from the N-terminus, the 339-residue chain is Glycerol-3-phosphate dehydrogenase [NAD(P)+] (339 aa).

S15, Y16, H36, and K110 together coordinate NADPH. Sn-glycerol 3-phosphate-binding residues include K110, G139, and T141. NADPH is bound at residue A143. Sn-glycerol 3-phosphate is bound by residues K195, D248, S258, R259, and N260. K195 acts as the Proton acceptor in catalysis. R259 contacts NADPH. Residues V283 and E285 each contribute to the NADPH site.

This sequence belongs to the NAD-dependent glycerol-3-phosphate dehydrogenase family.

It localises to the cytoplasm. It catalyses the reaction sn-glycerol 3-phosphate + NAD(+) = dihydroxyacetone phosphate + NADH + H(+). The enzyme catalyses sn-glycerol 3-phosphate + NADP(+) = dihydroxyacetone phosphate + NADPH + H(+). It participates in membrane lipid metabolism; glycerophospholipid metabolism. In terms of biological role, catalyzes the reduction of the glycolytic intermediate dihydroxyacetone phosphate (DHAP) to sn-glycerol 3-phosphate (G3P), the key precursor for phospholipid synthesis. This Escherichia fergusonii (strain ATCC 35469 / DSM 13698 / CCUG 18766 / IAM 14443 / JCM 21226 / LMG 7866 / NBRC 102419 / NCTC 12128 / CDC 0568-73) protein is Glycerol-3-phosphate dehydrogenase [NAD(P)+].